A 340-amino-acid chain; its full sequence is Entry-fusion complex protein OPG094 (340 aa).

Residues 1 to 20 are disordered; the sequence is MGGGVSVELPKRDPPPGVPT. A lipid anchor (N-myristoyl glycine; by host) is attached at G2. At 2–319 the chain is on the virion surface side; that stretch reads GGGVSVELPK…VQHNIKHSFD (318 aa). A helical; Signal-anchor for type II membrane protein transmembrane segment spans residues 320–340; it reads LKLHLISLLSLLVIWILIVAI.

It belongs to the orthopoxvirus OPG086 family. In terms of assembly, interacts with OPG143. Component of the entry fusion complex (EFC) composed of OPG053, OPG076, OPG086, OPG094, OPG095, OPG099, OPG107, OPG143, OPG104, OPG147 and OPG155. Except for OPG095 and OPG053, each of the EFC proteins is required for assembly or stability of the complex. In terms of processing, unglycosylated because produced in viral factories instead of the classic ER -Golgi route.

The protein resides in the virion membrane. Component of the entry fusion complex (EFC), which consists of 11 proteins. During cell infection, this complex mediates entry of the virion core into the host cytoplasm by a two-step mechanism consisting of lipid mixing of the viral and cellular membranes and subsequent pore formation. The chain is Entry-fusion complex protein OPG094 (OPG094) from Homo sapiens (Human).